The following is a 249-amino-acid chain: MKKTGYFLLAVIVIVAAAGVGYWKFSGNPDALREIVLEQCLPDQLQHQNPAPCAEVKPRAGYVVFKDRHGPLQYLLMPTYRINGTESPLLLEPATPNFFWLAWQARDYMSKKYGHDIPDSAVSLTVNSRLGRSQDHLHIHISCIRPDVREQLDNDLTRISTRWLPLPGGLMGHEYLARRVTESELAQRSPFMMLAEEVPEARDHMGRYGLAVVRQSDGSFVLLATQRNLLTLNRASAEEIQDHQCDILK.

The chain crosses the membrane as a helical span at residues 5–25; sequence GYFLLAVIVIVAAAGVGYWKF.

The protein belongs to the Cdh family.

The protein resides in the cell inner membrane. It carries out the reaction a CDP-1,2-diacyl-sn-glycerol + H2O = a 1,2-diacyl-sn-glycero-3-phosphate + CMP + 2 H(+). The protein operates within phospholipid metabolism; CDP-diacylglycerol degradation; phosphatidate from CDP-diacylglycerol: step 1/1. This Salmonella arizonae (strain ATCC BAA-731 / CDC346-86 / RSK2980) protein is CDP-diacylglycerol pyrophosphatase.